The following is a 116-amino-acid chain: Small ribosomal subunit protein bS16 (116 aa).

Belongs to the bacterial ribosomal protein bS16 family.

The polypeptide is Small ribosomal subunit protein bS16 (Chlamydia muridarum (strain MoPn / Nigg)).